We begin with the raw amino-acid sequence, 227 residues long: tRNA (guanine-N(1)-)-methyltransferase (227 aa).

S-adenosyl-L-methionine-binding positions include glycine 112 and 132–137 (LGDFVL).

The protein belongs to the RNA methyltransferase TrmD family. As to quaternary structure, homodimer.

The protein resides in the cytoplasm. It carries out the reaction guanosine(37) in tRNA + S-adenosyl-L-methionine = N(1)-methylguanosine(37) in tRNA + S-adenosyl-L-homocysteine + H(+). Specifically methylates guanosine-37 in various tRNAs. This chain is tRNA (guanine-N(1)-)-methyltransferase, found in Gloeobacter violaceus (strain ATCC 29082 / PCC 7421).